A 283-amino-acid polypeptide reads, in one-letter code: MRIIETVSEMQQQADDWRRAGKRIGFVPTMGYFHEGHLMLMRKVRGEADMVVASIFVNPAQFGPNEDLATYPRDLDRDLRLAGEVGVDVAFVPQVGEMYPDGYQTYVEVTKVTAPLCGRSRPLFFRGVATVVVKLFHIVKPHVAVFGEKDYQQLVTIRRMVKDLNLDIEILGHPIVREPDDLAMSSRNKYLTPEQRPLALRLSRALKAARARVALGERNGSVILKEVKELLDAGGEVRIDYAELRDPATMEEVGSMDGPSLLALAVFVGTTRLIDNCILRPAA.

Residue Met30 to His37 participates in ATP binding. His37 functions as the Proton donor in the catalytic mechanism. Gln61 is a binding site for (R)-pantoate. Residue Gln61 coordinates beta-alanine. Gly147–Asp150 serves as a coordination point for ATP. Gln153 is a (R)-pantoate binding site. ATP is bound by residues Val176 and Met184–Arg187.

Belongs to the pantothenate synthetase family. Homodimer.

The protein resides in the cytoplasm. The catalysed reaction is (R)-pantoate + beta-alanine + ATP = (R)-pantothenate + AMP + diphosphate + H(+). Its pathway is cofactor biosynthesis; (R)-pantothenate biosynthesis; (R)-pantothenate from (R)-pantoate and beta-alanine: step 1/1. Catalyzes the condensation of pantoate with beta-alanine in an ATP-dependent reaction via a pantoyl-adenylate intermediate. This chain is Pantothenate synthetase, found in Syntrophobacter fumaroxidans (strain DSM 10017 / MPOB).